Reading from the N-terminus, the 624-residue chain is Kelch-like ECH-associated protein 1 (624 aa).

Position 38 is an S-(2-succinyl)cysteine (Cys38). The region spanning 77–149 (CDVTLQVKYE…AYTASISVGE (73 aa)) is the BTB domain. Arg135 is covalently cross-linked (N5-[4-(S-L-cysteinyl)-5-methyl-1H-imidazol-2-yl]-L-ornithine (Arg-Cys) (interchain with C-151 in KEAP1)). 2 positions are modified to S-(2-succinyl)cysteine: Cys151 and Cys241. An S-(2,3-dicarboxypropyl)cysteine; alternate modification is found at Cys151. Cys151 is subject to S-nitrosocysteine; alternate. Cys151 participates in a covalent cross-link: N5-[4-(S-L-cysteinyl)-5-methyl-1H-imidazol-2-yl]-L-ornithine (Cys-Arg) (interchain with R-135 in KEAP1). One can recognise a BACK domain in the interval 184 to 286 (AIGIANFAEQ…TPRFLQTQLQ (103 aa)). An S-(2,3-dicarboxypropyl)cysteine mark is found at Cys257 and Cys273. 2 positions are modified to S-(2-succinyl)cysteine: Cys288 and Cys319. Cys288 carries the post-translational modification S-(2,3-dicarboxypropyl)cysteine; alternate. 6 Kelch repeats span residues 327 to 372 (LIYT…VVGG), 373 to 423 (LLYA…VIDG), 424 to 470 (HIYA…VLNR), 471 to 517 (LLYA…VLHS), 519 to 564 (IYAA…VHQG), and 565 to 611 (RIYV…VTME). Cys434 bears the S-cGMP-cysteine mark. Cys613 is subject to S-(2-succinyl)cysteine.

Belongs to the KEAP1 family. In terms of assembly, component of the BCR(KEAP1) E3 ubiquitin ligase complex, at least composed of 2 molecules of CUL3, 2 molecules of KEAP1, and RBX1. Interacts with NFE2L2/NRF2; the interaction is direct. Forms a ternary complex with NFE2L2/NRF2 and PGAM5. Interacts with (phosphorylated) SQSTM1/p62; the interaction is direct and inactivates the BCR(KEAP1) complex by sequestering it in inclusion bodies, promoting its degradation. Interacts with NFE2L1. Interacts with BPTF and PTMA. Interacts with MAP1LC3B. Interacts indirectly with ENC1. Interacts with SESN1 and SESN2. Interacts with HSP90AA1 and HSP90AB1. Interacts with PGCKA1; this interaction prevents the ubiquitination of KEAP1 by TRIM25, thus protecting KEAP1 from degradation. Non-enzymatic covalent modifications of reactive cysteines by electrophile metabolites inactivate the BCR(KEAP1) complex. Accumulation of fumarate promotes the formation of cysteine S-succination (S-(2-succinyl)cysteine), leading to inactivate the BCR(KEAP1) complex and promote NFE2L2/NRF2 nuclear accumulation and activation. Nitric oxide-dependent 8-Nitro-cGMP formation promotes cysteine guanylation (S-cGMP-cysteine), leading to NFE2L2/NRF2 nuclear accumulation and activation. Itaconate, an anti-inflammatory metabolite generated in response to lipopolysaccharide, alkylates cysteines, activating NFE2L2/NRF2. Methylglyoxal, a reactive metabolite that accumulates when the glycolytic enzyme PGK1 is inhibited, promotes formation of a methylimidazole cross-link between proximal Cys-151 and Arg-135 on another KEAP1 molecule, resulting in an inactive dimer that inactivates the BCR(KEAP1) complex. In terms of processing, degraded via a proteasomal-independent process during selective autophagy: interaction with phosphorylated SQSTM1/p62 sequesters KEAP1 in inclusion bodies, leading to its degradation. Post-translationally, auto-ubiquitinated by the BCR(KEAP1) complex. Quinone-induced oxidative stress, but not sulforaphane, increases its ubiquitination. Ubiquitination and subsequent degradation is most pronounced following prolonged exposure of cells to oxidative stress, particularly in glutathione-deficient cells that are highly susceptible to oxidative stress. Deubiquitinated by USP25; leading to stabilization. Ubiquitinated by TRIM25; leading to degradation upon ER stress.

The protein resides in the cytoplasm. Its subcellular location is the nucleus. Its pathway is protein modification; protein ubiquitination. With respect to regulation, ubiquitin ligase activity of the BCR(KEAP1) complex is inhibited by oxidative stress and electrophile metabolites such as sulforaphane. Electrophile metabolites react with reactive cysteine residues in KEAP1 and trigger non-enzymatic covalent modifications of these cysteine residues, leading to inactivate the ubiquitin ligase activity of the BCR(KEAP1) complex. Selective autophagy also inactivates the BCR(KEAP1) complex via interaction between KEAP1 and SQSTM1/p62, which sequesters the complex in inclusion bodies and promotes its degradation. Its function is as follows. Substrate-specific adapter of a BCR (BTB-CUL3-RBX1) E3 ubiquitin ligase complex that regulates the response to oxidative stress by targeting NFE2L2/NRF2 for ubiquitination. KEAP1 acts as a key sensor of oxidative and electrophilic stress: in normal conditions, the BCR(KEAP1) complex mediates ubiquitination and degradation of NFE2L2/NRF2, a transcription factor regulating expression of many cytoprotective genes. In response to oxidative stress, different electrophile metabolites trigger non-enzymatic covalent modifications of highly reactive cysteine residues in KEAP1, leading to inactivate the ubiquitin ligase activity of the BCR(KEAP1) complex, promoting NFE2L2/NRF2 nuclear accumulation and expression of phase II detoxifying enzymes. In response to selective autophagy, KEAP1 is sequestered in inclusion bodies following its interaction with SQSTM1/p62, leading to inactivation of the BCR(KEAP1) complex and activation of NFE2L2/NRF2. The BCR(KEAP1) complex also mediates ubiquitination of SQSTM1/p62, increasing SQSTM1/p62 sequestering activity and degradation. The BCR(KEAP1) complex also targets BPTF and PGAM5 for ubiquitination and degradation by the proteasome. In Rattus norvegicus (Rat), this protein is Kelch-like ECH-associated protein 1.